The chain runs to 526 residues: 4-alpha-glucanotransferase (526 aa).

The protein belongs to the disproportionating enzyme family.

The protein resides in the cytoplasm. The enzyme catalyses Transfers a segment of a (1-&gt;4)-alpha-D-glucan to a new position in an acceptor, which may be glucose or a (1-&gt;4)-alpha-D-glucan.. This chain is 4-alpha-glucanotransferase (malQ), found in Chlamydia pneumoniae (Chlamydophila pneumoniae).